Here is a 601-residue protein sequence, read N- to C-terminus: Elongation factor 4 (601 aa).

A tr-type G domain is found at 7-189 (DNIRNFSIVA…AIVKRLPAPK (183 aa)). GTP-binding positions include 19 to 24 (DHGKST) and 136 to 139 (NKVD).

Belongs to the TRAFAC class translation factor GTPase superfamily. Classic translation factor GTPase family. LepA subfamily.

It is found in the cell inner membrane. The enzyme catalyses GTP + H2O = GDP + phosphate + H(+). Its function is as follows. Required for accurate and efficient protein synthesis under certain stress conditions. May act as a fidelity factor of the translation reaction, by catalyzing a one-codon backward translocation of tRNAs on improperly translocated ribosomes. Back-translocation proceeds from a post-translocation (POST) complex to a pre-translocation (PRE) complex, thus giving elongation factor G a second chance to translocate the tRNAs correctly. Binds to ribosomes in a GTP-dependent manner. The protein is Elongation factor 4 of Methylorubrum extorquens (strain CM4 / NCIMB 13688) (Methylobacterium extorquens).